The sequence spans 557 residues: Formate--tetrahydrofolate ligase (557 aa).

66–73 lines the ATP pocket; that stretch reads TPAGEGKS.

Belongs to the formate--tetrahydrofolate ligase family.

It carries out the reaction (6S)-5,6,7,8-tetrahydrofolate + formate + ATP = (6R)-10-formyltetrahydrofolate + ADP + phosphate. Its pathway is one-carbon metabolism; tetrahydrofolate interconversion. The polypeptide is Formate--tetrahydrofolate ligase (Clostridium botulinum (strain Okra / Type B1)).